Reading from the N-terminus, the 182-residue chain is CDP-diacylglycerol--glycerol-3-phosphate 3-phosphatidyltransferase (182 aa).

The Cytoplasmic segment spans residues 2 to 12; that stretch reads QFNIPTLLTLF. Residues 13–37 form a helical membrane-spanning segment; it reads RVILIPFLVVVFYLPFAWAPMVSAL. The Periplasmic portion of the chain corresponds to 38-60; sequence IFCIAAITDWFDGFLARRWNQST. A helical membrane pass occupies residues 61-81; that stretch reads RFGAFLDPVADKVLVAIAMVL. At 82-86 the chain is on the cytoplasmic side; that stretch reads VTEHY. A helical transmembrane segment spans residues 87 to 107; the sequence is HSWWVTLPAATMIAREIIISA. The Periplasmic segment spans residues 108–145; it reads LREWMAELGKRSSVAVSWIGKVKTTAQMVALAWLLWRP. The helical transmembrane segment at 146–168 threads the bilayer; that stretch reads NIWVEYAGIALFFVAAVLTLWSM. Residues 169–181 lie on the Cytoplasmic side of the membrane; sequence LQYLSAARGDLLD.

It belongs to the CDP-alcohol phosphatidyltransferase class-I family.

It localises to the cell inner membrane. The enzyme catalyses a CDP-1,2-diacyl-sn-glycerol + sn-glycerol 3-phosphate = a 1,2-diacyl-sn-glycero-3-phospho-(1'-sn-glycero-3'-phosphate) + CMP + H(+). It functions in the pathway phospholipid metabolism; phosphatidylglycerol biosynthesis; phosphatidylglycerol from CDP-diacylglycerol: step 1/2. Catalyzes the conversion of cytidine diphosphate diacylglycerol (CDP-DG) and glycerol 3-phosphate into phosphatidylglycerol. Essential for the synthesis of anionic phospholipids, thereby playing a role in balancing the ratio of zwitterionic and anionic phospholipids, which is thought to be important for normal membrane function. The chain is CDP-diacylglycerol--glycerol-3-phosphate 3-phosphatidyltransferase from Salmonella choleraesuis (strain SC-B67).